Here is a 92-residue protein sequence, read N- to C-terminus: Small ribosomal subunit protein bS16 (92 aa).

The protein belongs to the bacterial ribosomal protein bS16 family.

The sequence is that of Small ribosomal subunit protein bS16 from Staphylococcus carnosus (strain TM300).